Here is a 178-residue protein sequence, read N- to C-terminus: UPF0098 protein PYRAB11530 (178 aa).

Positions 1–22 (MRYLVPLLVFMVLGMGCLGGGG) are cleaved as a signal peptide.

It belongs to the UPF0098 family.

In Pyrococcus abyssi (strain GE5 / Orsay), this protein is UPF0098 protein PYRAB11530.